The chain runs to 280 residues: Shikimate kinase (280 aa).

86 to 96 is an ATP binding site; that stretch reads PPGVGLKGSAA.

The protein belongs to the GHMP kinase family. Archaeal shikimate kinase subfamily.

It is found in the cytoplasm. The enzyme catalyses shikimate + ATP = 3-phosphoshikimate + ADP + H(+). It functions in the pathway metabolic intermediate biosynthesis; chorismate biosynthesis; chorismate from D-erythrose 4-phosphate and phosphoenolpyruvate: step 5/7. The sequence is that of Shikimate kinase (aroK) from Aeropyrum pernix (strain ATCC 700893 / DSM 11879 / JCM 9820 / NBRC 100138 / K1).